Here is a 240-residue protein sequence, read N- to C-terminus: NAD(P)H-quinone oxidoreductase subunit K (240 aa).

The [4Fe-4S] cluster site is built by Cys55, Cys56, Cys120, and Cys151.

Belongs to the complex I 20 kDa subunit family. In terms of assembly, NDH-1 can be composed of about 15 different subunits; different subcomplexes with different compositions have been identified which probably have different functions. It depends on [4Fe-4S] cluster as a cofactor.

Its subcellular location is the cellular thylakoid membrane. It catalyses the reaction a plastoquinone + NADH + (n+1) H(+)(in) = a plastoquinol + NAD(+) + n H(+)(out). The catalysed reaction is a plastoquinone + NADPH + (n+1) H(+)(in) = a plastoquinol + NADP(+) + n H(+)(out). In terms of biological role, NDH-1 shuttles electrons from an unknown electron donor, via FMN and iron-sulfur (Fe-S) centers, to quinones in the respiratory and/or the photosynthetic chain. The immediate electron acceptor for the enzyme in this species is believed to be plastoquinone. Couples the redox reaction to proton translocation, and thus conserves the redox energy in a proton gradient. Cyanobacterial NDH-1 also plays a role in inorganic carbon-concentration. The polypeptide is NAD(P)H-quinone oxidoreductase subunit K (Trichodesmium erythraeum (strain IMS101)).